We begin with the raw amino-acid sequence, 1470 residues long: Calmodulin-regulated spectrin-associated protein 2 (1470 aa).

The Calponin-homology (CH) domain maps to 222 to 335; it reads WKLVPARYRK…FMAELFWWFE (114 aa). The interval 374-397 is disordered; it reads SSSSSDFTSRYTRPQTHSSVSGGI. The segment covering 380 to 390 has biased composition (polar residues); that stretch reads FTSRYTRPQTH. Residues S402 and S404 each carry the phosphoserine modification. T412 is subject to Phosphothreonine. A phosphoserine mark is found at S450, S581, S582, S594, and S656. Disordered stretches follow at residues 580–622 and 648–712; these read QSSP…EDSS and ASNP…EGSE. T661 carries the post-translational modification Phosphothreonine. A Phosphoserine modification is found at S663. A compositionally biased stretch (low complexity) spans 663 to 682; that stretch reads STKSQPGSSASSSSGVKMTS. Over residues 686-696 the composition is skewed to basic and acidic residues; the sequence is QKFRKLNHTDG. Residues 739-776 are a coiled coil; it reads LLASEMVHLRMRLEEKRRAIEAQKKKMEAAFTKQRQKM. Basic and acidic residues predominate over residues 796 to 835; it reads REEAAGAEDEKVYTDRAKEKESQKMDGQRSKSLADIKESM. The tract at residues 796–864 is disordered; it reads REEAAGAEDE…QWNLTSPSEE (69 aa). A Phosphoserine modification is found at S845. Residues 870 to 909 are a coiled coil; sequence ELLEYTKSIEKLNSSLHFLQQEMQRLSLQQEMLMQMREQQ. The segment at 905–1016 is MBD region; that stretch reads MREQQSWVIS…IQTRSFVCFG (112 aa). 2 positions are modified to phosphoserine: S914 and S919. Disordered stretches follow at residues 930–1059 and 1078–1099; these read RQAG…PLES and NEDQ…PTAP. A compositionally biased stretch (low complexity) spans 935–946; that stretch reads SSAAAPFSADSP. Residues 952-971 are compositionally biased toward polar residues; it reads SPQSSTRKSASFSVKNQRTP. Phosphothreonine is present on residues T979, T984, and T986. Residues S990 and S1001 each carry the phosphoserine modification. The span at 1001-1011 shows a compositional bias: polar residues; that stretch reads SPSQVPIQTRS. Composition is skewed to basic and acidic residues over residues 1020 to 1037 and 1044 to 1056; these read EPQK…EPSE and SCDH…EVKP. Over residues 1086–1098 the composition is skewed to pro residues; it reads TDPPPKPVFPPTA. S1129 is subject to Phosphoserine. A coiled-coil region spans residues 1147 to 1219; the sequence is KDDQKAENDM…REFIRQEYMR (73 aa). Residues 1167 to 1233 show a composition bias toward basic and acidic residues; sequence RLRREKETQL…KLMEDMDTVI (67 aa). Residues 1167–1327 are disordered; that stretch reads RLRREKETQL…TTSSVASGTE (161 aa). The span at 1268–1280 shows a compositional bias: polar residues; the sequence is SSLSLASLNTGDT. Residues S1294, S1300, and S1302 each carry the phosphoserine modification. A compositionally biased stretch (polar residues) spans 1315–1327; that stretch reads NASTTSSVASGTE. One can recognise a CKK domain in the interval 1330-1464; the sequence is GPKLYKEPSA…QTKRPVTPKK (135 aa).

It belongs to the CAMSAP1 family. In terms of assembly, interacts with CAMSAP3. Interacts with KATNA1 and KATNB1; leading to regulate the length of CAMSAP2-decorated microtubule stretches. Interacts with a complex formed by AKAP9 and PDE4DIP; this interaction, which is PDE4DIP isoform-specific, recruits CAMSAP2 to the Golgi. Interacts with MAPRE1/EB1. As to expression, present in the soma, axon, and dendritic shaft of hippocampal neurons (at protein level).

It is found in the cytoplasm. It localises to the cytoskeleton. Its subcellular location is the golgi apparatus. The protein resides in the cilium basal body. Key microtubule-organizing protein that specifically binds the minus-end of non-centrosomal microtubules and regulates their dynamics and organization. Specifically recognizes growing microtubule minus-ends and autonomously decorates and stabilizes microtubule lattice formed by microtubule minus-end polymerization. Acts on free microtubule minus-ends that are not capped by microtubule-nucleating proteins or other factors and protects microtubule minus-ends from depolymerization. In addition, it also reduces the velocity of microtubule polymerization. Through the microtubule cytoskeleton, also regulates the organization of cellular organelles including the Golgi and the early endosomes. Essential for the tethering, but not for nucleation of non-centrosomal microtubules at the Golgi: together with Golgi-associated proteins AKAP9 and PDE4DIP, required to tether non-centrosomal minus-end microtubules to the Golgi, an important step for polarized cell movement. Also acts as a regulator of neuronal polarity and development: localizes to non-centrosomal microtubule minus-ends in neurons and stabilizes non-centrosomal microtubules, which is required for neuronal polarity, axon specification and dendritic branch formation. Through the microtubule cytoskeleton, regulates the autophagosome transport. This Rattus norvegicus (Rat) protein is Calmodulin-regulated spectrin-associated protein 2.